The chain runs to 154 residues: Endoribonuclease YbeY (154 aa).

Zn(2+)-binding residues include histidine 114, histidine 118, and histidine 124.

Belongs to the endoribonuclease YbeY family. Requires Zn(2+) as cofactor.

The protein localises to the cytoplasm. Functionally, single strand-specific metallo-endoribonuclease involved in late-stage 70S ribosome quality control and in maturation of the 3' terminus of the 16S rRNA. This chain is Endoribonuclease YbeY, found in Haemophilus influenzae (strain PittEE).